Reading from the N-terminus, the 213-residue chain is Imidazole glycerol phosphate synthase subunit HisH 2 (213 aa).

Positions R4–P211 constitute a Glutamine amidotransferase type-1 domain. C82 (nucleophile) is an active-site residue. Catalysis depends on residues H186 and E188.

Heterodimer of HisH and HisF.

The protein resides in the cytoplasm. The enzyme catalyses 5-[(5-phospho-1-deoxy-D-ribulos-1-ylimino)methylamino]-1-(5-phospho-beta-D-ribosyl)imidazole-4-carboxamide + L-glutamine = D-erythro-1-(imidazol-4-yl)glycerol 3-phosphate + 5-amino-1-(5-phospho-beta-D-ribosyl)imidazole-4-carboxamide + L-glutamate + H(+). The catalysed reaction is L-glutamine + H2O = L-glutamate + NH4(+). The protein operates within amino-acid biosynthesis; L-histidine biosynthesis; L-histidine from 5-phospho-alpha-D-ribose 1-diphosphate: step 5/9. Functionally, IGPS catalyzes the conversion of PRFAR and glutamine to IGP, AICAR and glutamate. The HisH subunit provides the glutamine amidotransferase activity that produces the ammonia necessary to HisF for the synthesis of IGP and AICAR. This is Imidazole glycerol phosphate synthase subunit HisH 2 (hisH2) from Prochlorococcus marinus (strain MIT 9313).